The primary structure comprises 259 residues: Bisphosphoglycerate mutase (259 aa).

N-acetylserine is present on Ser2. Substrate-binding positions include 10-17, 23-24, Arg62, 89-92, Arg100, and 116-117; these read RHGEGQWN, CS, ERHY, and RR. The active-site Tele-phosphohistidine intermediate is His11. The active-site Proton donor/acceptor is the Glu89. A Phosphothreonine modification is found at Thr122. 189–190 is a substrate binding site; it reads GN.

The protein belongs to the phosphoglycerate mutase family. BPG-dependent PGAM subfamily. In terms of assembly, homodimer. Expressed in red blood cells. Expressed in placenta (labyrinthine trophoblasts).

It carries out the reaction (2R)-3-phospho-glyceroyl phosphate = (2R)-2,3-bisphosphoglycerate + H(+). The enzyme catalyses (2R)-2-phosphoglycerate = (2R)-3-phosphoglycerate. Its activity is regulated as follows. At alkaline pH BPGM favors the synthase reaction; however, at lower pH the phosphatase reaction is dominant. Inhibited by citrate. Plays a major role in regulating hemoglobin oxygen affinity by controlling the levels of its allosteric effector 2,3-bisphosphoglycerate (2,3-BPG). Also exhibits mutase (EC 5.4.2.11) activity. In Mus musculus (Mouse), this protein is Bisphosphoglycerate mutase (Bpgm).